Consider the following 418-residue polypeptide: tRNA-2-methylthio-N(6)-dimethylallyladenosine synthase (418 aa).

Residues 2-118 (PGYYLWTIGC…WGEIPEGFIL (117 aa)) form the MTTase N-terminal domain. Residues Cys11, Cys47, Cys81, Cys134, Cys138, and Cys141 each contribute to the [4Fe-4S] cluster site. The Radical SAM core domain maps to 120 to 352 (LKPPVSASIT…DLQKETVSKA (233 aa)). Residues 354 to 414 (SALVDTFAEV…PWSLQAKLVK (61 aa)) enclose the TRAM domain.

This sequence belongs to the methylthiotransferase family. MiaB subfamily. Monomer. The cofactor is [4Fe-4S] cluster.

The protein localises to the cytoplasm. The catalysed reaction is N(6)-dimethylallyladenosine(37) in tRNA + (sulfur carrier)-SH + AH2 + 2 S-adenosyl-L-methionine = 2-methylsulfanyl-N(6)-dimethylallyladenosine(37) in tRNA + (sulfur carrier)-H + 5'-deoxyadenosine + L-methionine + A + S-adenosyl-L-homocysteine + 2 H(+). Catalyzes the methylthiolation of N6-(dimethylallyl)adenosine (i(6)A), leading to the formation of 2-methylthio-N6-(dimethylallyl)adenosine (ms(2)i(6)A) at position 37 in tRNAs that read codons beginning with uridine. This chain is tRNA-2-methylthio-N(6)-dimethylallyladenosine synthase, found in Dehalococcoides mccartyi (strain ATCC BAA-2266 / KCTC 15142 / 195) (Dehalococcoides ethenogenes (strain 195)).